The primary structure comprises 423 residues: tRNA(Ile)-lysidine synthase (423 aa).

ATP is bound at residue 43–48; the sequence is SSGVDS.

The protein belongs to the tRNA(Ile)-lysidine synthase family.

The protein localises to the cytoplasm. The enzyme catalyses cytidine(34) in tRNA(Ile2) + L-lysine + ATP = lysidine(34) in tRNA(Ile2) + AMP + diphosphate + H(+). Functionally, ligates lysine onto the cytidine present at position 34 of the AUA codon-specific tRNA(Ile) that contains the anticodon CAU, in an ATP-dependent manner. Cytidine is converted to lysidine, thus changing the amino acid specificity of the tRNA from methionine to isoleucine. This is tRNA(Ile)-lysidine synthase from Helicobacter hepaticus (strain ATCC 51449 / 3B1).